Here is a 514-residue protein sequence, read N- to C-terminus: MEISWGRAMWRNFLGQSPDWYKLALLVFLIVNPFIFLANPFIAGWLLVAEFIFTLAMALKCYPLLPGGLLAIEAVIIGMTSAAHVREEVAANLEVLLLLMFMVAGIYFMKQLLLFIFTRLLLSIRSKMVLSLAFCVAAAFLSAFLDALTVVAVVISVAVGFYGIYHRVASSRGEENDMLDDSHIDPHYKTVLEQFRGFLRSLMMHAGVGTALGGVMTMVGEPQNLIIAKAAGWHFGDFFLRMSPVTVPVLVCGLLTCMLVEKMRWFGYGETLPEKVRDVLQQFDDQSRKKRTRQDKIKLIVQAVIGVWLVTALALHLAEVGLIGLSVIILATALTGVTDEHAIGKAFTESLPFTALLTVFFSIVAVIIDQHLFAPIIQFVLQASEHAQLTLFYLFNGLLSSISDNVFVGTIYINEAKAAMENGAISLKQFELLAVAINTGTNLPSVATPNGQAAFLFLLTSALAPLIRLSYGRMVWMALPYTIVLTLIGLLCVEFTLAPATEWMTQAGWLATLS.

Helical transmembrane passes span 23–43 (LALLVFLIVNPFIFLANPFIA), 63–83 (PLLPGGLLAIEAVIIGMTSAA), 97–117 (LLLMFMVAGIYFMKQLLLFIF), 120–140 (LLLSIRSKMVLSLAFCVAAAF), 144–164 (FLDALTVVAVVISVAVGFYGI), 202–222 (LMMHAGVGTALGGVMTMVGEP), 238–258 (FFLRMSPVTVPVLVCGLLTCM), 303–323 (AVIGVWLVTALALHLAEVGLI), 357–377 (LTVFFSIVAVIIDQHLFAPII), 391–411 (LFYLFNGLLSSISDNVFVGTI), 447–467 (ATPNGQAAFLFLLTSALAPLI), and 475–495 (VWMALPYTIVLTLIGLLCVEF).

It belongs to the NhaB Na(+)/H(+) (TC 2.A.34) antiporter family.

The protein localises to the cell inner membrane. It carries out the reaction 2 Na(+)(in) + 3 H(+)(out) = 2 Na(+)(out) + 3 H(+)(in). Na(+)/H(+) antiporter that extrudes sodium in exchange for external protons. The sequence is that of Na(+)/H(+) antiporter NhaB from Salmonella choleraesuis (strain SC-B67).